We begin with the raw amino-acid sequence, 142 residues long: Succinate dehydrogenase assembly factor 2, mitochondrial (142 aa).

Belongs to the SDHAF2 family. Interacts with the flavoprotein subunit within the SDH catalytic dimer.

It localises to the mitochondrion matrix. Its function is as follows. Plays an essential role in the assembly of succinate dehydrogenase (SDH), an enzyme complex (also referred to as respiratory complex II) that is a component of both the tricarboxylic acid (TCA) cycle and the mitochondrial electron transport chain, and which couples the oxidation of succinate to fumarate with the reduction of ubiquinone (coenzyme Q) to ubiquinol. Required for flavinylation (covalent attachment of FAD) of the flavoprotein subunit of the SDH catalytic dimer. The chain is Succinate dehydrogenase assembly factor 2, mitochondrial from Debaryomyces hansenii (strain ATCC 36239 / CBS 767 / BCRC 21394 / JCM 1990 / NBRC 0083 / IGC 2968) (Yeast).